We begin with the raw amino-acid sequence, 260 residues long: Hydroxyethylthiazole kinase 1 (260 aa).

Methionine 39 is a binding site for substrate. Positions 115 and 160 each coordinate ATP. A substrate-binding site is contributed by glycine 187.

The protein belongs to the Thz kinase family. The cofactor is Mg(2+).

The enzyme catalyses 5-(2-hydroxyethyl)-4-methylthiazole + ATP = 4-methyl-5-(2-phosphooxyethyl)-thiazole + ADP + H(+). It participates in cofactor biosynthesis; thiamine diphosphate biosynthesis; 4-methyl-5-(2-phosphoethyl)-thiazole from 5-(2-hydroxyethyl)-4-methylthiazole: step 1/1. In terms of biological role, catalyzes the phosphorylation of the hydroxyl group of 4-methyl-5-beta-hydroxyethylthiazole (THZ). The chain is Hydroxyethylthiazole kinase 1 from Streptococcus pneumoniae (strain Hungary19A-6).